We begin with the raw amino-acid sequence, 63 residues long: MNNKINNIKITQVQSAIGRKYDQRLILVGLGLNKINKSVILANTNSIKGMVEKVKHLLKIENM.

It belongs to the universal ribosomal protein uL30 family. As to quaternary structure, part of the 50S ribosomal subunit.

This is Large ribosomal subunit protein uL30 from Rickettsia massiliae (strain Mtu5).